The sequence spans 102 residues: Aspartyl/glutamyl-tRNA(Asn/Gln) amidotransferase subunit C (102 aa).

The protein belongs to the GatC family. In terms of assembly, heterotrimer of A, B and C subunits.

It catalyses the reaction L-glutamyl-tRNA(Gln) + L-glutamine + ATP + H2O = L-glutaminyl-tRNA(Gln) + L-glutamate + ADP + phosphate + H(+). The enzyme catalyses L-aspartyl-tRNA(Asn) + L-glutamine + ATP + H2O = L-asparaginyl-tRNA(Asn) + L-glutamate + ADP + phosphate + 2 H(+). Allows the formation of correctly charged Asn-tRNA(Asn) or Gln-tRNA(Gln) through the transamidation of misacylated Asp-tRNA(Asn) or Glu-tRNA(Gln) in organisms which lack either or both of asparaginyl-tRNA or glutaminyl-tRNA synthetases. The reaction takes place in the presence of glutamine and ATP through an activated phospho-Asp-tRNA(Asn) or phospho-Glu-tRNA(Gln). The polypeptide is Aspartyl/glutamyl-tRNA(Asn/Gln) amidotransferase subunit C (Bordetella bronchiseptica (strain ATCC BAA-588 / NCTC 13252 / RB50) (Alcaligenes bronchisepticus)).